We begin with the raw amino-acid sequence, 74 residues long: Ferredoxin-like protein in nif region (74 aa).

In terms of domain architecture, 4Fe-4S ferredoxin-type spans 2–30 (PFKIIASQCTSCSACEPLCPNVAISEKGG). The [4Fe-4S] cluster site is built by cysteine 10, cysteine 13, cysteine 16, cysteine 20, cysteine 39, cysteine 51, and cysteine 55.

[4Fe-4S] cluster is required as a cofactor.

The protein is Ferredoxin-like protein in nif region (frxA) of Bradyrhizobium diazoefficiens (strain JCM 10833 / BCRC 13528 / IAM 13628 / NBRC 14792 / USDA 110).